The following is a 499-amino-acid chain: Maturase K (499 aa).

Belongs to the intron maturase 2 family. MatK subfamily.

It is found in the plastid. Its subcellular location is the chloroplast. Its function is as follows. Usually encoded in the trnK tRNA gene intron. Probably assists in splicing its own and other chloroplast group II introns. This Gymnocladus chinensis (Soap tree) protein is Maturase K.